The following is a 186-amino-acid chain: Casparian strip membrane protein 1 (186 aa).

Over 1 to 26 (MKGGSIELGEVSKNASTNKGVKRGLS) the chain is Cytoplasmic. The helical transmembrane segment at 27–47 (IMDFILRIIAGVATLASAVAM) threads the bilayer. Topologically, residues 48-72 (GTTDERLPFATSFVQFRAEYDDLPS) are extracellular. A helical membrane pass occupies residues 73-93 (FVFFVLANSIVCGYLALSLIL). Residues 94 to 107 (SILHIVRSTAVKSR) are Cytoplasmic-facing. Residues 108 to 128 (ILLIVLDMVMMGLLAAAASAA) form a helical membrane-spanning segment. Residues 129–157 (ASIVYIAHYGNTQANWFPICQQYNSFCER) lie on the Extracellular side of the membrane. A helical transmembrane segment spans residues 158 to 178 (ISGSLIGSYIAVALFIIIILL). Over 179-186 (SQSAISRN) the chain is Cytoplasmic.

Belongs to the Casparian strip membrane proteins (CASP) family. Homodimer and heterodimers.

Its subcellular location is the cell membrane. Regulates membrane-cell wall junctions and localized cell wall deposition. Required for establishment of the Casparian strip membrane domain (CSD) and the subsequent formation of Casparian strips, a cell wall modification of the root endodermis that determines an apoplastic barrier between the intraorganismal apoplasm and the extraorganismal apoplasm and prevents lateral diffusion. This chain is Casparian strip membrane protein 1, found in Medicago truncatula (Barrel medic).